The sequence spans 211 residues: tRNA (guanine-N(7)-)-methyltransferase (211 aa).

Positions 40, 65, 92, and 118 each coordinate S-adenosyl-L-methionine. Residue aspartate 118 is part of the active site. Substrate is bound by residues lysine 122 and aspartate 154.

This sequence belongs to the class I-like SAM-binding methyltransferase superfamily. TrmB family.

The enzyme catalyses guanosine(46) in tRNA + S-adenosyl-L-methionine = N(7)-methylguanosine(46) in tRNA + S-adenosyl-L-homocysteine. It participates in tRNA modification; N(7)-methylguanine-tRNA biosynthesis. Functionally, catalyzes the formation of N(7)-methylguanine at position 46 (m7G46) in tRNA. The sequence is that of tRNA (guanine-N(7)-)-methyltransferase from Microcystis aeruginosa (strain NIES-843 / IAM M-2473).